We begin with the raw amino-acid sequence, 201 residues long: Ribonuclease HII (201 aa).

The RNase H type-2 domain occupies 10-200 (LIEAGCDEAG…LGTDPQLEIP (191 aa)). Positions 16, 17, and 108 each coordinate a divalent metal cation.

The protein belongs to the RNase HII family. The cofactor is Mn(2+). It depends on Mg(2+) as a cofactor.

Its subcellular location is the cytoplasm. It carries out the reaction Endonucleolytic cleavage to 5'-phosphomonoester.. Its function is as follows. Endonuclease that specifically degrades the RNA of RNA-DNA hybrids. This chain is Ribonuclease HII, found in Phocaeicola vulgatus (strain ATCC 8482 / DSM 1447 / JCM 5826 / CCUG 4940 / NBRC 14291 / NCTC 11154) (Bacteroides vulgatus).